Consider the following 486-residue polypeptide: UDP-N-acetylglucosamine pyrophosphorylase (486 aa).

Positions 109 to 112 (MAGG) match the Substrate binding motif. UTP-binding positions include 109–112 (MAGG), Lys123, Gln199, and Gly226. Asn227 provides a ligand contact to substrate. Asp257 contacts UTP. The Substrate binding motif lies at 309 to 310 (EY). UTP is bound at residue Lys389. Position 421 (Lys421) interacts with substrate.

Belongs to the UDPGP type 1 family.

It localises to the cytoplasm. The enzyme catalyses N-acetyl-alpha-D-glucosamine 1-phosphate + UTP + H(+) = UDP-N-acetyl-alpha-D-glucosamine + diphosphate. It functions in the pathway nucleotide-sugar biosynthesis; UDP-N-acetyl-alpha-D-glucosamine biosynthesis; UDP-N-acetyl-alpha-D-glucosamine from N-acetyl-alpha-D-glucosamine 1-phosphate: step 1/1. The sequence is that of UDP-N-acetylglucosamine pyrophosphorylase (UAP1) from Candida albicans (Yeast).